Here is a 178-residue protein sequence, read N- to C-terminus: MSRIGNKVIVIPAGVTVEVNGATVTVKGPKGELVRSFNENITLEIAENEITVKRPNDTKEMKMLHGTTRALLANMVEGVSNGFSKALEMIGVGYRAQLQGTKLVLSVGKSHQDEVEAPENIKFVVATPTSIVVEGISKEAVGQTAAYIRSRRSPEPYKGKGIRYVGEYVRRKEGKTGK.

The protein belongs to the universal ribosomal protein uL6 family. In terms of assembly, part of the 50S ribosomal subunit.

Functionally, this protein binds to the 23S rRNA, and is important in its secondary structure. It is located near the subunit interface in the base of the L7/L12 stalk, and near the tRNA binding site of the peptidyltransferase center. The sequence is that of Large ribosomal subunit protein uL6 from Lactococcus lactis subsp. cremoris (strain SK11).